A 295-amino-acid polypeptide reads, in one-letter code: 15-cis-phytoene synthase (295 aa).

This sequence belongs to the phytoene/squalene synthase family. Requires ATP as cofactor. The cofactor is Mn(2+).

The enzyme catalyses 2 (2E,6E,10E)-geranylgeranyl diphosphate = 15-cis-phytoene + 2 diphosphate. Its pathway is carotenoid biosynthesis; phytoene biosynthesis. With respect to regulation, significant inhibition is seen at GGPP concentrations above 100 uM. Involved in the biosynthesis of carotenoids. Catalyzes stereoselectively the condensation of two molecules of geranylgeranyl diphosphate (GGPP) to give prephytoene diphosphate (PPPP) and the subsequent rearrangement of the cyclopropylcarbinyl intermediate to yield 15-cis-phytoene. In Enterobacter agglomerans (Erwinia herbicola), this protein is 15-cis-phytoene synthase (crtB).